Reading from the N-terminus, the 184-residue chain is ATP synthase subunit b, chloroplastic (184 aa).

The chain crosses the membrane as a helical span at residues 27–49; sequence LATNPINLSVVLGVLIFFGKGVL.

Belongs to the ATPase B chain family. F-type ATPases have 2 components, F(1) - the catalytic core - and F(0) - the membrane proton channel. F(1) has five subunits: alpha(3), beta(3), gamma(1), delta(1), epsilon(1). F(0) has four main subunits: a(1), b(1), b'(1) and c(10-14). The alpha and beta chains form an alternating ring which encloses part of the gamma chain. F(1) is attached to F(0) by a central stalk formed by the gamma and epsilon chains, while a peripheral stalk is formed by the delta, b and b' chains.

It localises to the plastid. It is found in the chloroplast thylakoid membrane. Functionally, f(1)F(0) ATP synthase produces ATP from ADP in the presence of a proton or sodium gradient. F-type ATPases consist of two structural domains, F(1) containing the extramembraneous catalytic core and F(0) containing the membrane proton channel, linked together by a central stalk and a peripheral stalk. During catalysis, ATP synthesis in the catalytic domain of F(1) is coupled via a rotary mechanism of the central stalk subunits to proton translocation. Component of the F(0) channel, it forms part of the peripheral stalk, linking F(1) to F(0). The sequence is that of ATP synthase subunit b, chloroplastic from Lepidium virginicum (Virginia pepperweed).